A 39-amino-acid chain; its full sequence is Photosystem II reaction center protein J (39 aa).

A helical transmembrane segment spans residues 9–29 (LWLVATVGGIAAITVLGIFIY).

It belongs to the PsbJ family. As to quaternary structure, PSII is composed of 1 copy each of membrane proteins PsbA, PsbB, PsbC, PsbD, PsbE, PsbF, PsbH, PsbI, PsbJ, PsbK, PsbL, PsbM, PsbT, PsbX, PsbY, PsbZ, Psb30/Ycf12, at least 3 peripheral proteins of the oxygen-evolving complex and a large number of cofactors. It forms dimeric complexes.

The protein localises to the plastid. Its subcellular location is the chloroplast thylakoid membrane. In terms of biological role, one of the components of the core complex of photosystem II (PSII). PSII is a light-driven water:plastoquinone oxidoreductase that uses light energy to abstract electrons from H(2)O, generating O(2) and a proton gradient subsequently used for ATP formation. It consists of a core antenna complex that captures photons, and an electron transfer chain that converts photonic excitation into a charge separation. This is Photosystem II reaction center protein J from Pyropia yezoensis (Susabi-nori).